The primary structure comprises 235 residues: Small ribosomal subunit protein uS3 (235 aa).

The KH type-2 domain maps to 39-107 (VRQFLNKELA…PAQINIAEVK (69 aa)). A disordered region spans residues 216-235 (QPEQQPTDKPKKVPRGKGRK).

The protein belongs to the universal ribosomal protein uS3 family. In terms of assembly, part of the 30S ribosomal subunit. Forms a tight complex with proteins S10 and S14.

Binds the lower part of the 30S subunit head. Binds mRNA in the 70S ribosome, positioning it for translation. The protein is Small ribosomal subunit protein uS3 of Aggregatibacter actinomycetemcomitans (Actinobacillus actinomycetemcomitans).